The following is a 429-amino-acid chain: Adenylosuccinate synthetase (429 aa).

GTP contacts are provided by residues 13–19 (GDEGKGK) and 41–43 (GHT). Catalysis depends on D14, which acts as the Proton acceptor. Mg(2+) is bound by residues D14 and G41. IMP contacts are provided by residues 14–17 (DEGK), 39–42 (NAGH), T130, R144, Q224, T239, and R303. H42 acts as the Proton donor in catalysis. Residue 299–305 (ATTGRAR) participates in substrate binding. Residues R305, 331–333 (KLD), and 412–414 (STG) each bind GTP.

The protein belongs to the adenylosuccinate synthetase family. Homodimer. Mg(2+) serves as cofactor.

The protein localises to the cytoplasm. The enzyme catalyses IMP + L-aspartate + GTP = N(6)-(1,2-dicarboxyethyl)-AMP + GDP + phosphate + 2 H(+). It functions in the pathway purine metabolism; AMP biosynthesis via de novo pathway; AMP from IMP: step 1/2. Plays an important role in the de novo pathway of purine nucleotide biosynthesis. Catalyzes the first committed step in the biosynthesis of AMP from IMP. The chain is Adenylosuccinate synthetase from Psychrobacter arcticus (strain DSM 17307 / VKM B-2377 / 273-4).